Reading from the N-terminus, the 652-residue chain is Aspartate--tRNA ligase, mitochondrial (652 aa).

Residues methionine 1–phenylalanine 46 constitute a mitochondrion transit peptide. Phosphothreonine is present on threonine 218. The residue at position 241 (serine 241) is a Phosphoserine. Positions glutamine 243–lysine 246 are aspartate. Arginine 265 contacts L-aspartate. Residues arginine 265–glutamate 267 and glutamate 534 contribute to the ATP site. Position 541 (arginine 541) interacts with L-aspartate. ATP is bound at residue glycine 583 to arginine 586.

The protein belongs to the class-II aminoacyl-tRNA synthetase family. Type 1 subfamily. In terms of assembly, homodimer.

It localises to the mitochondrion matrix. Its subcellular location is the mitochondrion membrane. The catalysed reaction is tRNA(Asp) + L-aspartate + ATP = L-aspartyl-tRNA(Asp) + AMP + diphosphate. Its function is as follows. Catalyzes the attachment of aspartate to tRNA(Asp) in a two-step reaction: aspartate is first activated by ATP to form Asp-AMP and then transferred to the acceptor end of tRNA(Asp). This chain is Aspartate--tRNA ligase, mitochondrial (Dars2), found in Rattus norvegicus (Rat).